Consider the following 332-residue polypeptide: Methionine import ATP-binding protein MetN (332 aa).

The ABC transporter domain maps to 2 to 239; it reads ITFQDVSKTY…PASDTARRFV (238 aa). 36–43 contributes to the ATP binding site; that stretch reads GASGAGKS.

Belongs to the ABC transporter superfamily. Methionine importer (TC 3.A.1.24) family. In terms of assembly, the complex is composed of two ATP-binding proteins (MetN), two transmembrane proteins (MetI) and a solute-binding protein (MetQ).

The protein resides in the cell inner membrane. It carries out the reaction L-methionine(out) + ATP + H2O = L-methionine(in) + ADP + phosphate + H(+). The catalysed reaction is D-methionine(out) + ATP + H2O = D-methionine(in) + ADP + phosphate + H(+). Functionally, part of the ABC transporter complex MetNIQ involved in methionine import. Responsible for energy coupling to the transport system. This Caulobacter vibrioides (strain ATCC 19089 / CIP 103742 / CB 15) (Caulobacter crescentus) protein is Methionine import ATP-binding protein MetN.